The following is a 141-amino-acid chain: Large-conductance mechanosensitive channel (141 aa).

The next 3 helical transmembrane spans lie at 16–36, 40–60, and 86–106; these read VIDL…VDSV, LIMP…MFIV, and GNFL…FLMV.

Belongs to the MscL family. As to quaternary structure, homopentamer.

It is found in the cell inner membrane. Channel that opens in response to stretch forces in the membrane lipid bilayer. May participate in the regulation of osmotic pressure changes within the cell. This is Large-conductance mechanosensitive channel from Cupriavidus necator (strain ATCC 17699 / DSM 428 / KCTC 22496 / NCIMB 10442 / H16 / Stanier 337) (Ralstonia eutropha).